The sequence spans 447 residues: Phosphoglucosamine mutase (447 aa).

Ser104 serves as the catalytic Phosphoserine intermediate. The Mg(2+) site is built by Ser104, Asp243, Asp245, and Asp247. Phosphoserine is present on Ser104.

Belongs to the phosphohexose mutase family. The cofactor is Mg(2+). In terms of processing, activated by phosphorylation.

The enzyme catalyses alpha-D-glucosamine 1-phosphate = D-glucosamine 6-phosphate. Catalyzes the conversion of glucosamine-6-phosphate to glucosamine-1-phosphate. In Corynebacterium diphtheriae (strain ATCC 700971 / NCTC 13129 / Biotype gravis), this protein is Phosphoglucosamine mutase.